A 212-amino-acid chain; its full sequence is Prolactin (212 aa).

Residues 1–24 (MAQRKTNGSKLFMMVLYMVAACSA) form the signal peptide. Disulfide bonds link C70–C185 and C202–C212.

This sequence belongs to the somatotropin/prolactin family. As to expression, pituitary gland.

Its subcellular location is the secreted. This chain is Prolactin (prl), found in Dicentrarchus labrax (European seabass).